Here is a 984-residue protein sequence, read N- to C-terminus: Serine/threonine-protein kinase N2 (984 aa).

S21 carries the phosphoserine modification. The REM-1 1 domain maps to 33-109; it reads KLDFSDTMVQ…LQELNAHIVV (77 aa). Residue K77 is modified to N6-acetyllysine. Residue S110 is modified to Phosphoserine. Residues 114 to 133 are disordered; sequence DITDCPRTPDTPNNDPRCST. 2 positions are modified to phosphothreonine: T121 and T124. 2 consecutive REM-1 domains span residues 121-203 and 204-284; these read TPDT…TNEL and AFDN…EVPK. Positions 123–133 are enriched in polar residues; sequence DTPNNDPRCST. Residues S302, S306, S360, and S362 each carry the phosphoserine modification. Residues 351–383 form a disordered region; it reads ATSVALPGWSPSETRSSFMSRTSKSKSGSSRNL. One can recognise a C2 domain in the interval 353-473; sequence SVALPGWSPS…LYLEPQGTLF (121 aa). Low complexity predominate over residues 364 to 381; the sequence is TRSSFMSRTSKSKSGSSR. Residues 382–463 form a necessary to rescue apical junction formation region; the sequence is NLLKTDDLSN…FLDNQRHGMC (82 aa). A phosphoserine mark is found at S535, S583, and S620. The interval 558 to 584 is disordered; that stretch reads ASDSTVTKLDFDLEPEPPPAPPRASSL. T628 carries the post-translational modification Phosphothreonine. Position 631 is a phosphoserine (S631). The 260-residue stretch at 657 to 916 folds into the Protein kinase domain; the sequence is FRCCAVLGRG…AEDVKKHPFF (260 aa). ATP contacts are provided by residues 663 to 671 and K686; that span reads LGRGHFGKV. D782 functions as the Proton acceptor in the catalytic mechanism. T816 bears the Phosphothreonine; by PDPK1 mark. The segment at 917-977 is necessary for the catalytic activity; that stretch reads RLIDWSALMD…EEEQEMFRDF (61 aa). The AGC-kinase C-terminal domain occupies 917-984; that stretch reads RLIDWSALMD…RDFDYIADWC (68 aa). Phosphoserine is present on S952. A Phosphothreonine modification is found at T958. The segment at 978 to 984 is negatively regulates the responsiveness of the catalytic activity by cardiolipin and is required for optimal activation by the GTP-bound RhoA; it reads DYIADWC.

The protein belongs to the protein kinase superfamily. AGC Ser/Thr protein kinase family. PKC subfamily. In terms of assembly, interacts (via the REM repeats) with RHOA (GTP-bound form preferentially) and interacts (via the REM repeats) with RAC1 (GTP-bound form preferentially); the interactions induce its autophosphorylation. Interacts with RHOC. Interacts with NCK1 and NCK2. Interacts with NCK1 (via SH3 domains). Interacts with CD44. Interacts (via C-terminal kinase domain) with PDPK1; the interaction stimulates PDPK1 kinase activity. Interacts with MAP3K2; the interaction activates PRK2 kinase activity in a MAP3K2-independent kinase activity. Interacts (via C-terminal domain) with AKT1; the interaction occurs with the C-terminal cleavage product of PRK2 in apoptotic cells. Interacts (via C-terminus) with PTPN13 (via PDZ 3 domain). Interacts with CDK10. As to quaternary structure, (Microbial infection) Interacts with HCV NS5B (via N-terminal finger domain). Autophosphorylated. Phosphorylated during mitosis. Phosphorylated by CDK10. In terms of processing, activated by limited proteolysis with trypsin. Proteolytically cleaved by caspase-3 during the induction of apoptotic cell death. As to expression, ubiquitous. Expressed in numerous tumor cell lines, especially in bladder tumor cells.

The protein localises to the cytoplasm. It localises to the nucleus. It is found in the membrane. Its subcellular location is the cell projection. The protein resides in the lamellipodium. The protein localises to the cytoskeleton. It localises to the cleavage furrow. It is found in the midbody. Its subcellular location is the cell junction. The enzyme catalyses L-seryl-[protein] + ATP = O-phospho-L-seryl-[protein] + ADP + H(+). It catalyses the reaction L-threonyl-[protein] + ATP = O-phospho-L-threonyl-[protein] + ADP + H(+). Kinase activity is activated upon binding to GTP-bound Rhoa/Rac1 GTPases. Activated by caspase-3 (CASP3) cleavage during apoptosis. Activated by lipids, particularly cardiolipin and to a lesser extent by other acidic phospholipids and unsaturated fatty acids. Two specific sites, Thr-816 (activation loop of the kinase domain) and Thr-958 (turn motif), need to be phosphorylated for its full activation. Functionally, PKC-related serine/threonine-protein kinase and Rho/Rac effector protein that participates in specific signal transduction responses in the cell. Plays a role in the regulation of cell cycle progression, actin cytoskeleton assembly, cell migration, cell adhesion, tumor cell invasion and transcription activation signaling processes. Phosphorylates CTTN in hyaluronan-induced astrocytes and hence decreases CTTN ability to associate with filamentous actin. Phosphorylates HDAC5, therefore lead to impair HDAC5 import. Direct RhoA target required for the regulation of the maturation of primordial junctions into apical junction formation in bronchial epithelial cells. Required for G2/M phases of the cell cycle progression and abscission during cytokinesis in a ECT2-dependent manner. Stimulates FYN kinase activity that is required for establishment of skin cell-cell adhesion during keratinocytes differentiation. Regulates epithelial bladder cells speed and direction of movement during cell migration and tumor cell invasion. Inhibits Akt pro-survival-induced kinase activity. Mediates Rho protein-induced transcriptional activation via the c-fos serum response factor (SRF). Involved in the negative regulation of ciliogenesis. In terms of biological role, (Microbial infection) Phosphorylates HCV NS5B leading to stimulation of HCV RNA replication. The chain is Serine/threonine-protein kinase N2 (PKN2) from Homo sapiens (Human).